The following is a 354-amino-acid chain: Membrane progestin receptor alpha-B (354 aa).

Over 1 to 76 (MATVVMEQIG…LTLFQRHNES (76 aa)) the chain is Cytoplasmic. A helical transmembrane segment spans residues 77–97 (VNVWTHLLASLIILVKFQELS). Residues 98 to 110 (ETVDFLRDPHAQP) are Extracellular-facing. A helical membrane pass occupies residues 111–131 (MFILLLAAFTYLGCSALAHLL). Topologically, residues 132-141 (SAKSEISHYT) are cytoplasmic. The chain crosses the membrane as a helical span at residues 142–162 (FYFLDYVGVAVYQYGSALAHF). Topologically, residues 163-175 (YYVVEEEWHAQVR) are extracellular. A helical membrane pass occupies residues 176-196 (TFFLPASAFLAWLSCTGCCYG). At 197-244 (KYASPKLPKFVHKLFQVVPSGLAYCLDISPVLHRIYRCYSSEHWCADQ) the chain is on the cytoplasmic side. The chain crosses the membrane as a helical span at residues 245–265 (AVVYHCYQVLFFLISAYFFSY). Over 266-277 (PHPERWFPGRCD) the chain is Extracellular. A helical transmembrane segment spans residues 278–298 (FIGQGHQIFHVFLVLCTLVQI). The Cytoplasmic portion of the chain corresponds to 299–318 (EAVRLDYTERRRLYEHLHGD). Residues 319 to 339 (LAHDAVALFIFTACCSALTAF) form a helical membrane-spanning segment. The Extracellular segment spans residues 340–354 (YVRKRVKTYLEEKQE).

Belongs to the ADIPOR family.

Its subcellular location is the cell membrane. Functionally, steroid membrane receptor. Signals upon progestin binding, resulting in rapid activation of MAPK and down-regulation of adenylyl cyclase activity. Interacts with steroids with varying degrees of affinity, showing specificity for activation by the maturation-inducing steroid (MIS) 4-pregnen-17,20beta-diol-3-one (17,20beta-DHP). Capable of mediating progestin-induced oocyte maturation. The sequence is that of Membrane progestin receptor alpha-B (paqr7b) from Danio rerio (Zebrafish).